Here is a 102-residue protein sequence, read N- to C-terminus: Aspartyl/glutamyl-tRNA(Asn/Gln) amidotransferase subunit C (102 aa).

It belongs to the GatC family. In terms of assembly, heterotrimer of A, B and C subunits.

The catalysed reaction is L-glutamyl-tRNA(Gln) + L-glutamine + ATP + H2O = L-glutaminyl-tRNA(Gln) + L-glutamate + ADP + phosphate + H(+). It catalyses the reaction L-aspartyl-tRNA(Asn) + L-glutamine + ATP + H2O = L-asparaginyl-tRNA(Asn) + L-glutamate + ADP + phosphate + 2 H(+). Allows the formation of correctly charged Asn-tRNA(Asn) or Gln-tRNA(Gln) through the transamidation of misacylated Asp-tRNA(Asn) or Glu-tRNA(Gln) in organisms which lack either or both of asparaginyl-tRNA or glutaminyl-tRNA synthetases. The reaction takes place in the presence of glutamine and ATP through an activated phospho-Asp-tRNA(Asn) or phospho-Glu-tRNA(Gln). The sequence is that of Aspartyl/glutamyl-tRNA(Asn/Gln) amidotransferase subunit C from Leuconostoc citreum (strain KM20).